Consider the following 111-residue polypeptide: Ribonuclease P protein component (111 aa).

It belongs to the RnpA family. Consists of a catalytic RNA component (M1 or rnpB) and a protein subunit.

It carries out the reaction Endonucleolytic cleavage of RNA, removing 5'-extranucleotides from tRNA precursor.. Functionally, RNaseP catalyzes the removal of the 5'-leader sequence from pre-tRNA to produce the mature 5'-terminus. It can also cleave other RNA substrates such as 4.5S RNA. The protein component plays an auxiliary but essential role in vivo by binding to the 5'-leader sequence and broadening the substrate specificity of the ribozyme. The chain is Ribonuclease P protein component from Mycoplasmopsis pulmonis (strain UAB CTIP) (Mycoplasma pulmonis).